The chain runs to 98 residues: MSADPRHYDVIVAPVITEKATNLSELNKVVFRVAPKATKPQIKEAVEKLFEVKVKSVNTLVTKGKTKMFRGQRGQRSDVKKAIVTLEEGQTIDVTTGL.

Belongs to the universal ribosomal protein uL23 family. Part of the 50S ribosomal subunit. Contacts protein L29, and trigger factor when it is bound to the ribosome.

In terms of biological role, one of the early assembly proteins it binds 23S rRNA. One of the proteins that surrounds the polypeptide exit tunnel on the outside of the ribosome. Forms the main docking site for trigger factor binding to the ribosome. The sequence is that of Large ribosomal subunit protein uL23 from Methylobacterium nodulans (strain LMG 21967 / CNCM I-2342 / ORS 2060).